A 270-amino-acid polypeptide reads, in one-letter code: 27 kDa core protein (270 aa).

The protein belongs to the chordopoxvirinae D3 family.

The protein localises to the virion. Functionally, late protein which is part of a large complex required for early virion morphogenesis. This complex participates in the formation of virosomes and the incorporation of virosomal contents into nascent immature virions. This is 27 kDa core protein from Vertebrata (FPV).